The primary structure comprises 192 residues: Ion-translocating oxidoreductase complex subunit B (192 aa).

Residues 1 to 26 form a hydrophobic region; the sequence is MSTIWIAIAALSALALAFGLVLGYAS. Positions 32–91 constitute a 4Fe-4S domain; the sequence is ENDPIVEEVEAMLPQSQCGQCGYPGCRPYAEAVALNGENINKCGPGGEAMMLKLAEKLNV. [4Fe-4S] cluster contacts are provided by Cys49, Cys52, Cys57, Cys74, Cys117, Cys120, Cys123, Cys127, Cys147, Cys150, Cys153, and Cys157. 2 consecutive 4Fe-4S ferredoxin-type domains span residues 108–137 and 138–167; these read QVAWIDESNCIGCTKCIQACPVDAIIGSTK and AVHTVVSDLCTGCDLCVAPCPTDCIELRPI.

The protein belongs to the 4Fe4S bacterial-type ferredoxin family. RnfB subfamily. The complex is composed of six subunits: RnfA, RnfB, RnfC, RnfD, RnfE and RnfG. Requires [4Fe-4S] cluster as cofactor.

It is found in the cell inner membrane. Its function is as follows. Part of a membrane-bound complex that couples electron transfer with translocation of ions across the membrane. The polypeptide is Ion-translocating oxidoreductase complex subunit B (Pectobacterium carotovorum subsp. carotovorum (strain PC1)).